The chain runs to 369 residues: Protein FAM187B (369 aa).

The N-terminal stretch at 1 to 17 is a signal peptide; it reads MPPMLWLLLHFAAPALG. Residues 18–335 lie on the Extracellular side of the membrane; it reads FYFSISCPSG…RADSVLKGLK (318 aa). N-linked (GlcNAc...) asparagine glycans are attached at residues asparagine 45, asparagine 68, and asparagine 130. Residues 336–356 traverse the membrane as a helical segment; that stretch reads LVLLVVTVLALLGALLKCIHP. Residues 357–369 lie on the Cytoplasmic side of the membrane; it reads SPGRRSTQVLVVK.

This sequence belongs to the FAM187 family.

It localises to the membrane. The polypeptide is Protein FAM187B (FAM187B) (Homo sapiens (Human)).